A 1054-amino-acid chain; its full sequence is Kinesin-like protein KIN-7G (1054 aa).

The Kinesin motor domain occupies 17 to 341; the sequence is KIFVSVRLRP…LLFASCAKEV (325 aa). Residue 105–112 participates in ATP binding; the sequence is GQTSSGKT. Coiled-coil stretches lie at residues 350–425 and 611–640; these read VMSD…IGEA and TETA…VSSV. 2 disordered regions span residues 600 to 648 and 740 to 760; these read CEPE…KEKS and ERAE…PKHI. Over residues 613 to 631 the composition is skewed to acidic residues; it reads TAEEKEEKEETEEKEEEEE.

This sequence belongs to the TRAFAC class myosin-kinesin ATPase superfamily. Kinesin family. KIN-7 subfamily.

This is Kinesin-like protein KIN-7G from Arabidopsis thaliana (Mouse-ear cress).